Consider the following 364-residue polypeptide: MSTINTVSLNQDASCMSVALDTGYKIFQINPLKLRAQRQFNDGGLSIVKMLFRSNVLLLVGGGGNPKYAPNKLIVWDDVKERPVKELELNFEIKGICFDGKLLAIATASKLFLYQFGNNLKLQRCLDTQNPKGLCAMVTTVEKTAIVFPSRKVGQLQILFLFKDHMNTSIVPAHDSEISCLGISKTGSKIASSSTNGTLIRIWNSETGEKICEFRRGYQHTAVCQLAFSPDELLLACASKKETLHIFSLHGSPNTIRQLTSEEPYEEASEFKSSTTEPRQTHWKRKLLKLIDSGKRAHWRIQLYQSNPVLLHWLDEMTILICYKDAAYQKLKLTIEESSKSVEHANQHVCFHYDYTLEADGSLC.

WD repeat units follow at residues 173-213 and 218-257; these read AHDS…KICE and YQHT…NTIR.

Belongs to the WD repeat PROPPIN family.

It localises to the vacuole membrane. It is found in the cytoplasmic vesicle membrane. Its subcellular location is the preautophagosomal structure membrane. Functionally, involved in mitochondrial or peroxisomal functions and amino acid signaling pathways. The polypeptide is SVP1-like protein 2 (hsv2) (Schizosaccharomyces pombe (strain 972 / ATCC 24843) (Fission yeast)).